The sequence spans 565 residues: Arginine--tRNA ligase (565 aa).

A 'HIGH' region motif is present at residues 121-131 (PNIAKPMGMGH).

This sequence belongs to the class-I aminoacyl-tRNA synthetase family. As to quaternary structure, monomer.

It is found in the cytoplasm. The enzyme catalyses tRNA(Arg) + L-arginine + ATP = L-arginyl-tRNA(Arg) + AMP + diphosphate. In Lactobacillus delbrueckii subsp. bulgaricus (strain ATCC BAA-365 / Lb-18), this protein is Arginine--tRNA ligase.